The sequence spans 38 residues: Photosystem II reaction center protein Y (38 aa).

A helical transmembrane segment spans residues 2–20 (ILIVLLPILLAATWAFINI).

It belongs to the PsbY family. PSII is composed of 1 copy each of membrane proteins PsbA, PsbB, PsbC, PsbD, PsbE, PsbF, PsbH, PsbI, PsbJ, PsbK, PsbL, PsbM, PsbT, PsbX, PsbY, Psb30/Ycf12, peripheral proteins PsbO, CyanoQ (PsbQ), PsbU, PsbV and a large number of cofactors. It forms dimeric complexes.

The protein resides in the cellular thylakoid membrane. Its function is as follows. Loosely associated component of the core of photosystem II (PSII), it is not always seen in crystals. PSII is a light-driven water plastoquinone oxidoreductase, using light energy to abstract electrons from H(2)O, generating a proton gradient subsequently used for ATP formation. The sequence is that of Photosystem II reaction center protein Y from Prochlorococcus marinus (strain MIT 9313).